The following is a 396-amino-acid chain: S-adenosylmethionine synthase 1 (396 aa).

Glu-12 serves as a coordination point for Mg(2+). His-18 is an ATP binding site. Position 46 (Glu-46) interacts with K(+). Positions 59 and 102 each coordinate L-methionine. ATP contacts are provided by residues 170–172 (DGK), 238–241 (SGRF), Asp-249, 255–256 (RK), Ala-272, Lys-276, and Lys-280. L-methionine is bound at residue Asp-249. Lys-280 contributes to the L-methionine binding site.

The protein belongs to the AdoMet synthase family. As to quaternary structure, homotetramer. Mn(2+) serves as cofactor. Mg(2+) is required as a cofactor. The cofactor is Co(2+). It depends on K(+) as a cofactor.

Its subcellular location is the cytoplasm. It carries out the reaction L-methionine + ATP + H2O = S-adenosyl-L-methionine + phosphate + diphosphate. The protein operates within amino-acid biosynthesis; S-adenosyl-L-methionine biosynthesis; S-adenosyl-L-methionine from L-methionine: step 1/1. In terms of biological role, catalyzes the formation of S-adenosylmethionine from methionine and ATP. The reaction comprises two steps that are both catalyzed by the same enzyme: formation of S-adenosylmethionine (AdoMet) and triphosphate, and subsequent hydrolysis of the triphosphate. The sequence is that of S-adenosylmethionine synthase 1 (SAM1) from Oryza sativa subsp. japonica (Rice).